The sequence spans 353 residues: Photosystem II D2 protein (353 aa).

Position 2 is an N-acetylthreonine (threonine 2). Threonine 2 carries the phosphothreonine modification. A helical membrane pass occupies residues 41 to 61 (CAYFALGGWLTGTTFVTSWYT). Residue histidine 118 coordinates chlorophyll a. The chain crosses the membrane as a helical span at residues 125-141 (GFMLRQFEIARSVGLRP). Glutamine 130 and asparagine 143 together coordinate pheophytin a. Residues 153-166 (VFVSVFLIYPLGQS) traverse the membrane as a helical segment. Histidine 198 is a chlorophyll a binding site. A helical transmembrane segment spans residues 208-228 (AALLCAIHGATVENTIFEDGD). Residues histidine 215 and phenylalanine 262 each contribute to the a plastoquinone site. Histidine 215 lines the Fe cation pocket. Residue histidine 269 coordinates Fe cation. A helical transmembrane segment spans residues 279–295 (GLWMSAIGVVGLALNLR).

It belongs to the reaction center PufL/M/PsbA/D family. In terms of assembly, PSII is composed of 1 copy each of membrane proteins PsbA, PsbB, PsbC, PsbD, PsbE, PsbF, PsbH, PsbI, PsbJ, PsbK, PsbL, PsbM, PsbT, PsbX, PsbY, PsbZ, Psb30/Ycf12, at least 3 peripheral proteins of the oxygen-evolving complex and a large number of cofactors. It forms dimeric complexes. The cofactor is The D1/D2 heterodimer binds P680, chlorophylls that are the primary electron donor of PSII, and subsequent electron acceptors. It shares a non-heme iron and each subunit binds pheophytin, quinone, additional chlorophylls, carotenoids and lipids. There is also a Cl(-1) ion associated with D1 and D2, which is required for oxygen evolution. The PSII complex binds additional chlorophylls, carotenoids and specific lipids..

It is found in the plastid. It localises to the chloroplast thylakoid membrane. It carries out the reaction 2 a plastoquinone + 4 hnu + 2 H2O = 2 a plastoquinol + O2. Functionally, photosystem II (PSII) is a light-driven water:plastoquinone oxidoreductase that uses light energy to abstract electrons from H(2)O, generating O(2) and a proton gradient subsequently used for ATP formation. It consists of a core antenna complex that captures photons, and an electron transfer chain that converts photonic excitation into a charge separation. The D1/D2 (PsbA/PsbD) reaction center heterodimer binds P680, the primary electron donor of PSII as well as several subsequent electron acceptors. D2 is needed for assembly of a stable PSII complex. This is Photosystem II D2 protein from Staurastrum punctulatum (Green alga).